A 449-amino-acid polypeptide reads, in one-letter code: Tubulin alpha chain (449 aa).

A GTP-binding site is contributed by Q11. K40 bears the N6-acetyllysine mark. Residues E71, S140, G144, T145, T179, N206, and N228 each contribute to the GTP site. E71 contacts Mg(2+). Residue E254 is part of the active site.

It belongs to the tubulin family. Dimer of alpha and beta chains. A typical microtubule is a hollow water-filled tube with an outer diameter of 25 nm and an inner diameter of 15 nM. Alpha-beta heterodimers associate head-to-tail to form protofilaments running lengthwise along the microtubule wall with the beta-tubulin subunit facing the microtubule plus end conferring a structural polarity. Microtubules usually have 13 protofilaments but different protofilament numbers can be found in some organisms and specialized cells. It depends on Mg(2+) as a cofactor. Undergoes a tyrosination/detyrosination cycle, the cyclic removal and re-addition of a C-terminal tyrosine residue by the enzymes tubulin tyrosine carboxypeptidase (TTCP) and tubulin tyrosine ligase (TTL), respectively. Post-translationally, acetylation of alpha chains at Lys-40 stabilizes microtubules and affects affinity and processivity of microtubule motors. This modification has a role in multiple cellular functions, ranging from cell motility, cell cycle progression or cell differentiation to intracellular trafficking and signaling.

The protein localises to the cytoplasm. The protein resides in the cytoskeleton. It catalyses the reaction GTP + H2O = GDP + phosphate + H(+). Functionally, tubulin is the major constituent of microtubules, a cylinder consisting of laterally associated linear protofilaments composed of alpha- and beta-tubulin heterodimers. Microtubules grow by the addition of GTP-tubulin dimers to the microtubule end, where a stabilizing cap forms. Below the cap, tubulin dimers are in GDP-bound state, owing to GTPase activity of alpha-tubulin. This chain is Tubulin alpha chain, found in Tetrahymena pyriformis.